Here is a 503-residue protein sequence, read N- to C-terminus: Glutamate/gamma-aminobutyrate antiporter (503 aa).

33-43 (LHLVFFLLLGG) provides a ligand contact to L-glutamate. 7 consecutive transmembrane segments (helical) span residues 35-55 (LVFFLLLGGLLWFLPVALCAA), 153-173 (FVVGIVIPSIILFGLAAAYFI), 194-214 (VSTLVVFVSFILAYMGVEASA), 232-252 (ILLVILAISLDAIGGFSVAAV), 366-386 (LTVVIYLVGYLLFFIGYFVLI), 407-427 (IIAGIGFLLSIFALFISFVPP), and 440-460 (MILLISFVVTAILPFIVYELH).

Belongs to the amino acid-polyamine-organocation (APC) superfamily. Glutamate:GABA antiporter (GGA) (TC 2.A.3.7) family.

The protein localises to the cell membrane. It catalyses the reaction 4-aminobutanoate(in) + L-glutamate(out) = 4-aminobutanoate(out) + L-glutamate(in). Its function is as follows. Involved in glutaminase-dependent acid resistance. Exchanges extracellular glutamate (Glu) for intracellular gamma-aminobutyric acid (GABA) under acidic conditions. In Lactococcus lactis subsp. lactis (strain IL1403) (Streptococcus lactis), this protein is Glutamate/gamma-aminobutyrate antiporter (gadC).